The following is a 394-amino-acid chain: Phosphoglycerate kinase (394 aa).

Substrate-binding positions include 21-23 (DFN), Arg36, 59-62 (HLGR), Arg118, and Arg151. Ser183 carries the phosphoserine modification. Residues Lys201 and Gly292 each coordinate ATP. Residue Thr299 is modified to Phosphothreonine. ATP is bound by residues Glu323 and 350-353 (GGDS).

This sequence belongs to the phosphoglycerate kinase family. As to quaternary structure, monomer.

The protein resides in the cytoplasm. It catalyses the reaction (2R)-3-phosphoglycerate + ATP = (2R)-3-phospho-glyceroyl phosphate + ADP. The protein operates within carbohydrate degradation; glycolysis; pyruvate from D-glyceraldehyde 3-phosphate: step 2/5. This is Phosphoglycerate kinase from Bacillus cereus (strain ATCC 10987 / NRS 248).